The chain runs to 315 residues: Ribose-phosphate pyrophosphokinase (315 aa).

Residues 37–39 and 96–97 each bind ATP; these read DGE and RQ. His131 and Asp170 together coordinate Mg(2+). Lys194 is an active-site residue. Residues Arg196, Asp220, and 224 to 228 each bind D-ribose 5-phosphate; that span reads DTGGT.

The protein belongs to the ribose-phosphate pyrophosphokinase family. Class I subfamily. Homohexamer. Mg(2+) is required as a cofactor.

It localises to the cytoplasm. The catalysed reaction is D-ribose 5-phosphate + ATP = 5-phospho-alpha-D-ribose 1-diphosphate + AMP + H(+). The protein operates within metabolic intermediate biosynthesis; 5-phospho-alpha-D-ribose 1-diphosphate biosynthesis; 5-phospho-alpha-D-ribose 1-diphosphate from D-ribose 5-phosphate (route I): step 1/1. In terms of biological role, involved in the biosynthesis of the central metabolite phospho-alpha-D-ribosyl-1-pyrophosphate (PRPP) via the transfer of pyrophosphoryl group from ATP to 1-hydroxyl of ribose-5-phosphate (Rib-5-P). The sequence is that of Ribose-phosphate pyrophosphokinase from Photorhabdus laumondii subsp. laumondii (strain DSM 15139 / CIP 105565 / TT01) (Photorhabdus luminescens subsp. laumondii).